We begin with the raw amino-acid sequence, 414 residues long: Histidinol dehydrogenase (414 aa).

3 residues coordinate NAD(+): tyrosine 116, glutamine 177, and asparagine 200. Threonine 223, glutamine 245, and histidine 248 together coordinate substrate. Residues glutamine 245 and histidine 248 each coordinate Zn(2+). Active-site proton acceptor residues include glutamate 313 and histidine 314. Substrate-binding residues include histidine 314, aspartate 347, glutamate 401, and histidine 406. Aspartate 347 provides a ligand contact to Zn(2+). Histidine 406 is a binding site for Zn(2+).

This sequence belongs to the histidinol dehydrogenase family. It depends on Zn(2+) as a cofactor.

It catalyses the reaction L-histidinol + 2 NAD(+) + H2O = L-histidine + 2 NADH + 3 H(+). Its pathway is amino-acid biosynthesis; L-histidine biosynthesis; L-histidine from 5-phospho-alpha-D-ribose 1-diphosphate: step 9/9. Functionally, catalyzes the sequential NAD-dependent oxidations of L-histidinol to L-histidinaldehyde and then to L-histidine. This chain is Histidinol dehydrogenase, found in Staphylococcus epidermidis (strain ATCC 12228 / FDA PCI 1200).